Consider the following 720-residue polypeptide: Engulfment and cell motility protein 3 (720 aa).

In terms of domain architecture, ELMO spans 307 to 479 (EQREQLQVLR…VVREQLARTL (173 aa)). The PH domain occupies 542-664 (RLCEGTLFRK…TDGLSALLGS (123 aa)). Residues 696-706 (PERPPPVPPPP) carry the SH3-binding motif.

In terms of assembly, probably interacts directly with the SH3-domain of DOCK1 via its SH3-binding site. Part of a complex with DOCK1 and RAC1. Interacts with ADGRB3.

It localises to the cytoplasm. Functionally, involved in cytoskeletal rearrangements required for phagocytosis of apoptotic cells and cell motility. Acts in association with DOCK1 and CRK. Was initially proposed to be required in complex with DOCK1 to activate Rac Rho small GTPases. May enhance the guanine nucleotide exchange factor (GEF) activity of DOCK1. This chain is Engulfment and cell motility protein 3 (ELMO3), found in Homo sapiens (Human).